A 127-amino-acid polypeptide reads, in one-letter code: Holo-[acyl-carrier-protein] synthase (127 aa).

Mg(2+) is bound by residues aspartate 8 and glutamate 56.

It belongs to the P-Pant transferase superfamily. AcpS family. It depends on Mg(2+) as a cofactor.

Its subcellular location is the cytoplasm. It carries out the reaction apo-[ACP] + CoA = holo-[ACP] + adenosine 3',5'-bisphosphate + H(+). Its function is as follows. Transfers the 4'-phosphopantetheine moiety from coenzyme A to a Ser of acyl-carrier-protein. This chain is Holo-[acyl-carrier-protein] synthase, found in Deinococcus deserti (strain DSM 17065 / CIP 109153 / LMG 22923 / VCD115).